A 265-amino-acid polypeptide reads, in one-letter code: Tryptophan synthase alpha chain (265 aa).

Active-site proton acceptor residues include glutamate 49 and glutamate 60.

This sequence belongs to the TrpA family. In terms of assembly, tetramer of two alpha and two beta chains.

The enzyme catalyses (1S,2R)-1-C-(indol-3-yl)glycerol 3-phosphate + L-serine = D-glyceraldehyde 3-phosphate + L-tryptophan + H2O. It participates in amino-acid biosynthesis; L-tryptophan biosynthesis; L-tryptophan from chorismate: step 5/5. Its function is as follows. The alpha subunit is responsible for the aldol cleavage of indoleglycerol phosphate to indole and glyceraldehyde 3-phosphate. This is Tryptophan synthase alpha chain from Janthinobacterium sp. (strain Marseille) (Minibacterium massiliensis).